Reading from the N-terminus, the 893-residue chain is DNA mismatch repair protein MutS (893 aa).

Over residues 1-17 the composition is skewed to low complexity; the sequence is MESTMSSASTNASPPSA. The tract at residues 1–22 is disordered; that stretch reads MESTMSSASTNASPPSASEKHT. ATP is bound at residue 641–648; that stretch reads GPNMGGKS.

It belongs to the DNA mismatch repair MutS family.

Its function is as follows. This protein is involved in the repair of mismatches in DNA. It is possible that it carries out the mismatch recognition step. This protein has a weak ATPase activity. The chain is DNA mismatch repair protein MutS from Herminiimonas arsenicoxydans.